Consider the following 762-residue polypeptide: Coleoptile phototropism protein 1 (762 aa).

A compositionally biased stretch (basic and acidic residues) spans 1–12 (MWESESESHGGE). Residues 1 to 29 (MWESESESHGGERGLVPVGGGGGSGRHEA) form a disordered region. The 78-residue stretch at 51–128 (SDLLVKVGDV…SYGMAVDLTA (78 aa)) folds into the BTB domain. The span at 227 to 238 (PAAIRGGGGSGG) shows a compositional bias: gly residues. 4 disordered regions span residues 227–264 (PAAI…RQAV), 460–495 (MAVA…ASAS), 687–718 (QVDG…AWSS), and 731–762 (GADA…NSIS). Positions 268–607 (DWWFEDVSVL…VQVLFTEQVK (340 aa)) constitute an NPH3 domain. The stretch at 654–691 (AAAKKDINTLKFELESMKAKYLELQHEMDALQKQVDGR) forms a coiled coil. Positions 696-709 (PSPAAAKIGKQQQQ) are enriched in low complexity. A compositionally biased stretch (gly residues) spans 736–747 (AGGGVAPPGGGE). Positions 752-762 (KGPRRWRNSIS) are enriched in basic residues.

Belongs to the NPH3 family.

It participates in protein modification; protein ubiquitination. In terms of biological role, may act as a substrate-specific adapter of an E3 ubiquitin-protein ligase complex (CUL3-RBX1-BTB) which mediates the ubiquitination and subsequent proteasomal degradation of target proteins. Plays a role as signal transduction component in coleoptile phototropism and lateral translocation of auxin. The chain is Coleoptile phototropism protein 1 (CPT1) from Oryza sativa subsp. japonica (Rice).